The following is a 222-amino-acid chain: Riboflavin kinase (222 aa).

A unknown region spans residues 1–92 (MVEAEDLQSL…VRIFNPDQRG (92 aa)). The riboflavin kinase stretch occupies residues 93–222 (YTLTGTVISG…DTIEVEITHD (130 aa)). 102–107 (GLGEGR) provides a ligand contact to CDP. Mg(2+)-binding residues include T131 and N133. FMN-binding residues include T188 and E196. 201 to 204 (CELR) serves as a coordination point for CDP.

It belongs to the archaeal riboflavin kinase family. Mg(2+) serves as cofactor.

It catalyses the reaction riboflavin + CTP = CDP + FMN + H(+). Its pathway is cofactor biosynthesis; FMN biosynthesis; FMN from riboflavin (CTP route): step 1/1. Functionally, catalyzes the CTP-dependent phosphorylation of riboflavin (vitamin B2) to form flavin mononucleotide (FMN). This is Riboflavin kinase (ribK) from Methanoculleus marisnigri (strain ATCC 35101 / DSM 1498 / JR1).